A 308-amino-acid chain; its full sequence is Putative S-adenosyl-L-methionine-dependent methyltransferase MAB_4584c (308 aa).

S-adenosyl-L-methionine contacts are provided by residues Asp131 and 160–161 (DL).

It belongs to the UPF0677 family.

Its function is as follows. Exhibits S-adenosyl-L-methionine-dependent methyltransferase activity. This Mycobacteroides abscessus (strain ATCC 19977 / DSM 44196 / CCUG 20993 / CIP 104536 / JCM 13569 / NCTC 13031 / TMC 1543 / L948) (Mycobacterium abscessus) protein is Putative S-adenosyl-L-methionine-dependent methyltransferase MAB_4584c.